A 407-amino-acid polypeptide reads, in one-letter code: Acetate kinase (407 aa).

Residue asparagine 10 participates in Mg(2+) binding. Residue lysine 17 coordinates ATP. Arginine 91 lines the substrate pocket. The Proton donor/acceptor role is filled by aspartate 150. ATP is bound by residues 210-214, 285-287, and 338-342; these read HLGNG, DCR, and GIGEN. Position 392 (glutamate 392) interacts with Mg(2+).

Belongs to the acetokinase family. Homodimer. Requires Mg(2+) as cofactor. Mn(2+) is required as a cofactor.

It is found in the cytoplasm. The enzyme catalyses acetate + ATP = acetyl phosphate + ADP. It functions in the pathway metabolic intermediate biosynthesis; acetyl-CoA biosynthesis; acetyl-CoA from acetate: step 1/2. Functionally, catalyzes the formation of acetyl phosphate from acetate and ATP. Can also catalyze the reverse reaction. The chain is Acetate kinase from Mannheimia succiniciproducens (strain KCTC 0769BP / MBEL55E).